A 241-amino-acid chain; its full sequence is Putative ABC transporter ATP-binding protein CA_C0773 (241 aa).

The ABC transporter domain occupies 2–241 (IKLEKVSFTY…REFLMECNII (240 aa)). Residue 34–41 (GPNGSGKS) coordinates ATP.

This sequence belongs to the ABC transporter superfamily.

The protein localises to the cell membrane. Functionally, probably part of an ABC transporter complex. Responsible for energy coupling to the transport system. The protein is Putative ABC transporter ATP-binding protein CA_C0773 of Clostridium acetobutylicum (strain ATCC 824 / DSM 792 / JCM 1419 / IAM 19013 / LMG 5710 / NBRC 13948 / NRRL B-527 / VKM B-1787 / 2291 / W).